Reading from the N-terminus, the 430-residue chain is Delta-aminolevulinic acid dehydratase 1, chloroplastic (430 aa).

The transit peptide at 1–52 (MATTPIFNASCSFPSTRGIDCKSYIGLRSNVSKVSVASSRIATSQRRNLVVR) directs the protein to the chloroplast. Residues 82 to 91 (EAPPVPPKPA) show a composition bias toward pro residues. Residues 82 to 101 (EAPPVPPKPAAPVGTPIIKP) are disordered. Catalysis depends on K298, which acts as the Schiff-base intermediate with substrate. The 5-aminolevulinate site is built by R308 and K320. E336 serves as a coordination point for Mg(2+). The Schiff-base intermediate with substrate role is filled by K351. Residues S377 and Y416 each contribute to the 5-aminolevulinate site.

Belongs to the ALAD family. In terms of assembly, homooctamer. It depends on Mg(2+) as a cofactor. In terms of tissue distribution, highly expressed in cotyledons during dark-to-light transition.

It is found in the plastid. The protein resides in the chloroplast. The catalysed reaction is 2 5-aminolevulinate = porphobilinogen + 2 H2O + H(+). The protein operates within porphyrin-containing compound metabolism; protoporphyrin-IX biosynthesis; coproporphyrinogen-III from 5-aminolevulinate: step 1/4. It participates in porphyrin-containing compound metabolism; chlorophyll biosynthesis. In terms of biological role, catalyzes an early step in the biosynthesis of tetrapyrroles. Binds two molecules of 5-aminolevulinate per subunit, each at a distinct site, and catalyzes their condensation to form porphobilinogen. This chain is Delta-aminolevulinic acid dehydratase 1, chloroplastic (HEMB1), found in Arabidopsis thaliana (Mouse-ear cress).